The primary structure comprises 48 residues: Bacteriochlorophyll c-binding protein (48 aa).

Position 25 (H25) interacts with a bacteriochlorophyll c.

Belongs to the BChl C/E-binding protein family.

The protein localises to the chlorosome. Its subcellular location is the chlorosome envelope. In terms of biological role, component of the photosynthetic apparatus. The light harvesting B740 complex binds bacteriochlorophyll c. The polypeptide is Bacteriochlorophyll c-binding protein (csmA) (Chlorobaculum thiosulfatiphilum (Chlorobium limicola f.sp. thiosulfatophilum)).